A 1024-amino-acid chain; its full sequence is Translation initiation factor IF-2 (1024 aa).

The tract at residues 33–425 (SHMSSLEDDT…GRVKKTKTMK (393 aa)) is disordered. 4 stretches are compositionally biased toward basic and acidic residues: residues 43-62 (EARV…DTRV), 135-148 (TPED…ELKP), 167-198 (TPAK…KETS), and 223-263 (SKPD…KEVR). Polar residues predominate over residues 316–325 (EATQAPTSPQ). Positions 332–350 (KPADKGPARAQAHRPDTGR) are enriched in basic and acidic residues. The segment covering 365-375 (RSKKKEWKKKG) has biased composition (basic residues). A compositionally biased stretch (basic and acidic residues) spans 394–406 (SVVEGKDLYEKGR). The span at 407–423 (SGKKGRRKDGRVKKTKT) shows a compositional bias: basic residues. The tr-type G domain maps to 518–687 (SRPPVVTIMG…LLQSEVLELK (170 aa)). The interval 527-534 (GHVDHGKT) is G1. 527–534 (GHVDHGKT) contacts GTP. The segment at 552 to 556 (GITQH) is G2. The G3 stretch occupies residues 573–576 (DTPG). GTP is bound by residues 573 to 577 (DTPGH) and 627 to 630 (NKMD). Positions 627-630 (NKMD) are G4. Positions 663–665 (SAK) are G5.

This sequence belongs to the TRAFAC class translation factor GTPase superfamily. Classic translation factor GTPase family. IF-2 subfamily.

It localises to the cytoplasm. Functionally, one of the essential components for the initiation of protein synthesis. Protects formylmethionyl-tRNA from spontaneous hydrolysis and promotes its binding to the 30S ribosomal subunits. Also involved in the hydrolysis of GTP during the formation of the 70S ribosomal complex. This chain is Translation initiation factor IF-2, found in Desulforapulum autotrophicum (strain ATCC 43914 / DSM 3382 / VKM B-1955 / HRM2) (Desulfobacterium autotrophicum).